Here is a 189-residue protein sequence, read N- to C-terminus: dCTP deaminase (189 aa).

Residues K112–R117, T136–E138, Q157, Y171, and Q181 contribute to the dCTP site. E138 serves as the catalytic Proton donor/acceptor.

The protein belongs to the dCTP deaminase family. As to quaternary structure, homotrimer.

It carries out the reaction dCTP + H2O + H(+) = dUTP + NH4(+). It participates in pyrimidine metabolism; dUMP biosynthesis; dUMP from dCTP (dUTP route): step 1/2. Catalyzes the deamination of dCTP to dUTP. The sequence is that of dCTP deaminase from Burkholderia mallei (strain NCTC 10247).